The following is a 181-amino-acid chain: 3-hydroxyanthranilate 3,4-dioxygenase (181 aa).

Arg46 is a binding site for O2. The Fe cation site is built by His50, Glu56, and His95. Glu56 is a substrate binding site. Residues Arg99 and Glu109 each contribute to the substrate site.

Belongs to the 3-HAO family. Fe(2+) serves as cofactor.

It localises to the cytoplasm. It carries out the reaction 3-hydroxyanthranilate + O2 = (2Z,4Z)-2-amino-3-carboxymuconate 6-semialdehyde. It participates in cofactor biosynthesis; NAD(+) biosynthesis; quinolinate from L-kynurenine: step 3/3. Its function is as follows. Catalyzes the oxidative ring opening of 3-hydroxyanthranilate to 2-amino-3-carboxymuconate semialdehyde, which spontaneously cyclizes to quinolinate. This is 3-hydroxyanthranilate 3,4-dioxygenase from Mycosarcoma maydis (Corn smut fungus).